The primary structure comprises 180 residues: Probable DNA-directed RNA polymerase subunit delta (180 aa).

One can recognise an HTH HARE-type domain in the interval 14-81; it reads LSMIEVARAI…GHNVWALRSW (68 aa). Positions 89–180 are disordered; it reads EEVNHPEDEE…HQDDLDDDDE (92 aa). A compositionally biased stretch (acidic residues) spans 115-163; sequence DSDDDDIIDYDSDDPEDEDLDVDEEDTNEDDYSDDDLDDADDNELDDGI.

This sequence belongs to the RpoE family. In terms of assembly, RNAP is composed of a core of 2 alpha, a beta and a beta' subunits. The core is associated with a delta subunit and one of several sigma factors.

Its function is as follows. Participates in both the initiation and recycling phases of transcription. In the presence of the delta subunit, RNAP displays an increased specificity of transcription, a decreased affinity for nucleic acids, and an increased efficiency of RNA synthesis because of enhanced recycling. This chain is Probable DNA-directed RNA polymerase subunit delta, found in Lactobacillus johnsonii (strain CNCM I-12250 / La1 / NCC 533).